The following is a 665-amino-acid chain: Probable arginine--tRNA ligase, cytoplasmic (665 aa).

L-arginine contacts are provided by residues 204-206 (SPN), histidine 215, tyrosine 390, aspartate 394, and glutamine 418. Residues 205-216 (PNIAKQMHVGHL) carry the 'HIGH' region motif. Residues 535 to 549 (NTAVYLLYTYTRICS) are interaction with tRNA.

This sequence belongs to the class-I aminoacyl-tRNA synthetase family.

The protein localises to the cytoplasm. It localises to the cytosol. It catalyses the reaction tRNA(Arg) + L-arginine + ATP = L-arginyl-tRNA(Arg) + AMP + diphosphate. Functionally, forms part of a macromolecular complex that catalyzes the attachment of specific amino acids to cognate tRNAs during protein synthesis. In Drosophila melanogaster (Fruit fly), this protein is Probable arginine--tRNA ligase, cytoplasmic.